Consider the following 60-residue polypeptide: Potassium channel toxin alpha-KTx 15.8 (60 aa).

The signal sequence occupies residues 1-22 (MKFSSIILLTLLICSMSIFGNC). A Pyrrolidone carboxylic acid modification is found at glutamine 23. Intrachain disulfides connect cysteine 30/cysteine 50, cysteine 35/cysteine 55, and cysteine 39/cysteine 57.

Belongs to the short scorpion toxin superfamily. Potassium channel inhibitor family. Alpha-KTx 15 subfamily. Expressed by the venom gland.

It is found in the secreted. Blocker of A-type voltage-gated potassium channels of cerebellar granular cells. May also inhibit Kv4/KCND when coexpressed with DPP6 or DPP10. The occlusion of the outer entry of the K(+) conducting pore is partially reversible and affects both open and closed channels. It shares the same target in rat brain than BmTX3 (AC Q8I0L5) and AmmTX3 (AC P60208). Also shows a weak inhibition on Kv1.2/KCNA2 and Kv1.3/KCNA3 voltage-gated potassium channels. The chain is Potassium channel toxin alpha-KTx 15.8 from Olivierus martensii (Manchurian scorpion).